The sequence spans 684 residues: ATP-dependent zinc metalloprotease FtsH (684 aa).

Over 1–21 the chain is Cytoplasmic; the sequence is MENKNDMFNKTPKSGKPKMFR. A helical transmembrane segment spans residues 22–42; sequence FNLYWMYGLIFIMLVALYMTN. Residues 43–138 lie on the Periplasmic side of the membrane; that stretch reads DSSGTKELGW…QVRFEEGDDA (96 aa). Residues 139-159 form a helical membrane-spanning segment; the sequence is IWNFLVSFGPIILLIGVWMFL. Residues 160–684 lie on the Cytoplasmic side of the membrane; that stretch reads MRRMSGGTGA…TEENKTGKIA (525 aa). 236–243 is a binding site for ATP; sequence GPPGTGKT. A Zn(2+)-binding site is contributed by His-459. Glu-460 is an active-site residue. Zn(2+) contacts are provided by His-463 and Asp-534. Residues 647-662 are compositionally biased toward basic and acidic residues; that stretch reads EKANGKNKENADKEAE. A disordered region spans residues 647 to 684; it reads EKANGKNKENADKEAEADATTENVTDTPTEENKTGKIA.

The protein in the central section; belongs to the AAA ATPase family. In the C-terminal section; belongs to the peptidase M41 family. In terms of assembly, homohexamer. Zn(2+) serves as cofactor.

Its subcellular location is the cell inner membrane. Acts as a processive, ATP-dependent zinc metallopeptidase for both cytoplasmic and membrane proteins. Plays a role in the quality control of integral membrane proteins. This chain is ATP-dependent zinc metalloprotease FtsH, found in Parabacteroides distasonis (strain ATCC 8503 / DSM 20701 / CIP 104284 / JCM 5825 / NCTC 11152).